The following is a 269-amino-acid chain: Interleukin-1 beta (269 aa).

Residues 1-117 constitute a propeptide that is removed on maturation; the sequence is MATVPELNCE…DDDDNLLVCD (117 aa).

This sequence belongs to the IL-1 family. As to quaternary structure, monomer. Interacts with MEFV. Interacts with integrins ITGAV:ITGBV and ITGA5:ITGB1; integrin-binding is required for IL1B signaling. Interacts with cargo receptor TMED10; the interaction is direct and is required for the secretion of IL1B mature form. Interacts with HSP90AB1; the interaction facilitates cargo translocation into the ERGIC. Interacts with HSP90B1; the interaction facilitates cargo translocation into the ERGIC. In terms of tissue distribution, expressed in activated macrophages (at protein level).

The protein resides in the cytoplasm. Its subcellular location is the cytosol. It is found in the secreted. The protein localises to the lysosome. It localises to the extracellular exosome. Its function is as follows. Potent pro-inflammatory cytokine. Initially discovered as the major endogenous pyrogen, induces prostaglandin synthesis, neutrophil influx and activation, T-cell activation and cytokine production, B-cell activation and antibody production, and fibroblast proliferation and collagen production. Promotes Th17 differentiation of T-cells. Synergizes with IL12/interleukin-12 to induce IFNG synthesis from T-helper 1 (Th1) cells. Plays a role in angiogenesis by inducing VEGF production synergistically with TNF and IL6. Involved in transduction of inflammation downstream of pyroptosis: its mature form is specifically released in the extracellular milieu by passing through the gasdermin-D (GSDMD) pore. The polypeptide is Interleukin-1 beta (Il1b) (Mus musculus (Mouse)).